Here is a 209-residue protein sequence, read N- to C-terminus: MSSQYSNVENLSPQTIRQVMRELQEMETTPPEGIKVLINESDVTDIQALIDGPAGTPYAVGIFRVKLTLSKDFPQTPPKAYFLTKIFHPNVAGNGEICVNTLKKDWKPDLGIKHILLTIKCLLIVPNPESALNEEAGKMLLERYDDYSQRARMMTEIHAQPAKCGVGAASDAKDDDGPSTKKHAGLDKKLQDKKKEKLLKEKKRMLKRL.

The UBC core domain occupies 14–160 (QTIRQVMREL…ARMMTEIHAQ (147 aa)). Cys-98 serves as the catalytic Glycyl thioester intermediate. The disordered stretch occupies residues 165–194 (GVGAASDAKDDDGPSTKKHAGLDKKLQDKK). Over residues 171 to 194 (DAKDDDGPSTKKHAGLDKKLQDKK) the composition is skewed to basic and acidic residues.

It belongs to the ubiquitin-conjugating enzyme family.

The enzyme catalyses S-ubiquitinyl-[E1 ubiquitin-activating enzyme]-L-cysteine + [E2 ubiquitin-conjugating enzyme]-L-cysteine = [E1 ubiquitin-activating enzyme]-L-cysteine + S-ubiquitinyl-[E2 ubiquitin-conjugating enzyme]-L-cysteine.. It participates in protein modification; protein ubiquitination. Its function is as follows. Catalyzes the covalent attachment of ubiquitin to other proteins. Acts as an essential factor of the anaphase promoting complex/cyclosome (APC/C), a cell cycle-regulated ubiquitin ligase that controls progression through mitosis. Acts by specifically elongating polyubiquitin chains initiated by the E2 enzyme vih/UbcH10 on APC/C substrates, enhancing the degradation of APC/C substrates by the proteasome and promoting mitotic exit. This is Ubiquitin-conjugating enzyme E2 S from Drosophila persimilis (Fruit fly).